The following is a 461-amino-acid chain: Argininosuccinate lyase (461 aa).

Belongs to the lyase 1 family. Argininosuccinate lyase subfamily.

The protein localises to the cytoplasm. It carries out the reaction 2-(N(omega)-L-arginino)succinate = fumarate + L-arginine. It participates in amino-acid biosynthesis; L-arginine biosynthesis; L-arginine from L-ornithine and carbamoyl phosphate: step 3/3. In Trichormus variabilis (strain ATCC 29413 / PCC 7937) (Anabaena variabilis), this protein is Argininosuccinate lyase.